The chain runs to 532 residues: Drimenyl diphosphate synthase (532 aa).

(2E,6E)-farnesyl diphosphate contacts are provided by R121, K122, Q152, and W154. Mg(2+) is bound at residue E158. PFTB repeat units follow at residues P275–G317, I325–P367, K428–G469, and L475–L518. D304 serves as the catalytic Proton donor. R502 is a binding site for (2E,6E)-farnesyl diphosphate.

This sequence belongs to the terpene cyclase/mutase family. It depends on Mg(2+) as a cofactor. Ni(2+) serves as cofactor. Requires Co(2+) as cofactor.

It catalyses the reaction (2E,6E)-farnesyl diphosphate = (5S,9S,10S)-drim-7-en-11-yl diphosphate. Catalyzes the cyclization of farnesyl diphosphate (FPP) to drimenyl diphosphate. In Streptantibioticus cattleyicolor (strain ATCC 35852 / DSM 46488 / JCM 4925 / NBRC 14057 / NRRL 8057) (Streptomyces cattleya), this protein is Drimenyl diphosphate synthase.